Consider the following 772-residue polypeptide: Metabotropic glutamate receptor-like protein G (772 aa).

Residues 1-23 (MKKIIFLVLFLIFIFKDIKSSYG) form the signal peptide. Residues 24–391 (VDLVNFKMIT…TQVKFSPSIQ (368 aa)) are Extracellular-facing. N-linked (GlcNAc...) asparagine glycans are attached at residues Asn-73, Asn-126, Asn-262, Asn-313, Asn-343, and Asn-378. Residues 392–412 (IGVSIVSGVLIAIVLLSMVGV) traverse the membrane as a helical segment. The Cytoplasmic segment spans residues 413 to 426 (YKYRASSSIRSASP). Residues 427–447 (IFLIFILFGALIVFGGIILWV) form a helical membrane-spanning segment. Residues 448-463 (SELNDHVCNGRLWMVT) lie on the Extracellular side of the membrane. Residues 464–484 (LGFSTLIGSLVVKNFRIWLIF) traverse the membrane as a helical segment. The Cytoplasmic segment spans residues 485-500 (DNPELKTVKITNYQLY). The helical transmembrane segment at 501 to 521 (PWVACCLVINIILMSILTSLG) threads the bilayer. The Extracellular portion of the chain corresponds to 522–551 (DLREVDATGIDSLGKYEFLKICKMNNSGAS). The N-linked (GlcNAc...) asparagine glycan is linked to Asn-546. A helical transmembrane segment spans residues 552-572 (VLYTILAYFGALLLTGVFVSW). Topologically, residues 573 to 586 (KIRIVDIEEFNESR) are cytoplasmic. A helical transmembrane segment spans residues 587–607 (AIAHTLYAISFCLFVIVPLMI). At 608-616 (SPLEKQSET) the chain is on the extracellular side. Residues 617 to 637 (IILSVAGLFITTAAVLIIFLP) traverse the membrane as a helical segment. Over 638–772 (KFYRVYEYGE…QIEPDEKNQD (135 aa)) the chain is Cytoplasmic. A disordered region spans residues 664 to 772 (TARAESHKSS…QIEPDEKNQD (109 aa)). Acidic residues predominate over residues 718–728 (FTEESVSEIDE). Residues 740 to 753 (PEINQSEQQNSEIE) show a composition bias toward low complexity. A compositionally biased stretch (pro residues) spans 754–763 (QPPPPPPPQQ).

The protein in the N-terminal section; belongs to the BMP lipoprotein family. It in the C-terminal section; belongs to the G-protein coupled receptor 3 family. GABA-B receptor subfamily.

The protein resides in the membrane. This chain is Metabotropic glutamate receptor-like protein G (grlG), found in Dictyostelium discoideum (Social amoeba).